A 239-amino-acid chain; its full sequence is 2-C-methyl-D-erythritol 4-phosphate cytidylyltransferase (239 aa).

The protein belongs to the IspD/TarI cytidylyltransferase family. IspD subfamily.

It catalyses the reaction 2-C-methyl-D-erythritol 4-phosphate + CTP + H(+) = 4-CDP-2-C-methyl-D-erythritol + diphosphate. It functions in the pathway isoprenoid biosynthesis; isopentenyl diphosphate biosynthesis via DXP pathway; isopentenyl diphosphate from 1-deoxy-D-xylulose 5-phosphate: step 2/6. Its function is as follows. Catalyzes the formation of 4-diphosphocytidyl-2-C-methyl-D-erythritol from CTP and 2-C-methyl-D-erythritol 4-phosphate (MEP). This is 2-C-methyl-D-erythritol 4-phosphate cytidylyltransferase from Ruthia magnifica subsp. Calyptogena magnifica.